A 486-amino-acid chain; its full sequence is Protein DETOXIFICATION 53 (486 aa).

A run of 12 helical transmembrane segments spans residues 15 to 35, 45 to 65, 94 to 114, 130 to 150, 159 to 179, 187 to 207, 240 to 260, 267 to 287, 312 to 332, 346 to 366, 386 to 406, and 413 to 433; these read CPIV…MWFL, GGAL…KGLS, LLIV…PIFL, MLFF…RTFL, LTIS…VFVV, GVAI…LVYT, AISV…CGLL, VAAM…PFAI, VIGL…VTAL, ILGL…GNSP, VNLC…TFGF, and LWFG…YTLI. The disordered stretch occupies residues 448-474; that stretch reads TSAAADKSHSEDETVHAEVQDDDDVSS. Residues 453–466 are compositionally biased toward basic and acidic residues; the sequence is DKSHSEDETVHAEV.

The protein belongs to the multi antimicrobial extrusion (MATE) (TC 2.A.66.1) family.

The protein localises to the membrane. In Arabidopsis thaliana (Mouse-ear cress), this protein is Protein DETOXIFICATION 53.